The chain runs to 631 residues: Glycosyltransferase-like protein LARGE (631 aa).

Residues 1–6 are Cytoplasmic-facing; the sequence is MQSNYS. A helical; Signal-anchor for type II membrane protein transmembrane segment spans residues 7 to 27; the sequence is ISYFLLILFTGTSSYFTIWNF. At 28–631 the chain is on the lumenal side; that stretch reads VDHTRVGAFP…TASRLGIKLR (604 aa). 11 N-linked (GlcNAc...) asparagine glycosylation sites follow: N95, N105, N167, N177, N287, N400, N485, N502, N521, N529, and N593.

This sequence belongs to the glycosyltransferase 8 family.

It is found in the golgi apparatus membrane. In terms of biological role, probable glycosyltransferase. This chain is Glycosyltransferase-like protein LARGE (lge-1), found in Caenorhabditis elegans.